The chain runs to 155 residues: Endoribonuclease YbeY (155 aa).

His120, His124, and His130 together coordinate Zn(2+).

Belongs to the endoribonuclease YbeY family. Requires Zn(2+) as cofactor.

The protein resides in the cytoplasm. Functionally, single strand-specific metallo-endoribonuclease involved in late-stage 70S ribosome quality control and in maturation of the 3' terminus of the 16S rRNA. This chain is Endoribonuclease YbeY, found in Staphylococcus aureus (strain MSSA476).